Consider the following 181-residue polypeptide: Resolvase/recombinase (181 aa).

The Resolvase/invertase-type recombinase catalytic domain occupies 2–137; it reads RLFGYARVST…EGRLEAKAKG (136 aa). Serine 10 functions as the O-(5'-phospho-DNA)-serine intermediate in the catalytic mechanism. Residues 161–180 constitute a DNA-binding region (H-T-H motif); it reads AMEIAKRLKIGRSTVYKVLA.

This sequence belongs to the site-specific recombinase resolvase family.

Functionally, site-specific recombination protein. The protein is Resolvase/recombinase of Pseudomonas putida (Arthrobacter siderocapsulatus).